The primary structure comprises 361 residues: Cytochrome c peroxidase, mitochondrial (361 aa).

The transit peptide at 1 to 67 (MTTAVRLLPS…NWGKAAALAS (67 aa)) directs the protein to the mitochondrion. The Proton acceptor role is filled by H119. Phosphotyrosine is present on Y220. H242 is a binding site for heme b. W258 acts as the Tryptophan radical intermediate in catalysis.

It belongs to the peroxidase family. Cytochrome c peroxidase subfamily. As to quaternary structure, forms a one-to-one complex with cytochrome c. Requires heme b as cofactor. Post-translationally, CCP1 precursor is processed by the rhomboid protease PCP1, which cleaves the N-terminal hydrophobic transit peptide. The m-AAA protease (composed of YTA12/RCA1 and YTA10/AFG3) is required for CCP1 maturation: m-AAA protease promotes membrane dislocation of the CCP1 transmembrane segment within the transit peptide to ensure the correct positioning of CCP1 within the membrane bilayer, allowing intramembrane cleavage by PCP1.

The protein localises to the mitochondrion matrix. It localises to the mitochondrion intermembrane space. The catalysed reaction is 2 Fe(II)-[cytochrome c] + H2O2 + 2 H(+) = 2 Fe(III)-[cytochrome c] + 2 H2O. Its function is as follows. Destroys radicals which are normally produced within the cells and which are toxic to biological systems. In Saccharomyces cerevisiae (strain ATCC 204508 / S288c) (Baker's yeast), this protein is Cytochrome c peroxidase, mitochondrial (CCP1).